The chain runs to 140 residues: Large ribosomal subunit protein bL17 (140 aa).

Belongs to the bacterial ribosomal protein bL17 family. Part of the 50S ribosomal subunit. Contacts protein L32.

This is Large ribosomal subunit protein bL17 from Rhizobium leguminosarum bv. trifolii (strain WSM2304).